The following is a 174-amino-acid chain: MTHCCSPCCQPTCCRTTCCRTTCWKPTTVTTCSSTPCCQPACCVSSCCQPCCRPTCCQNTCCRTTCCQPTCVTSCCQPSCCSTPCCQPTCCGSSCCGQTSCGSSCGQSSSCAPVYCRRTCYYPTTVCLPGCLNQSCGSNCCQPCCRPACCETTCCRTTCFQPTCVSSCCQPSCC.

17 tandem repeats follow at residues 8–12 (CCQPT), 13–17 (CCRTT), 18–22 (CCRTT), 37–41 (CCQPA), 42–46 (CCVSS), 51–55 (CCRPT), 61–65 (CCRTT), 66–70 (CCQPT), 75–79 (CCQPS), 80–84 (CCSTP), 85–89 (CCQPT), 90–94 (CCGSS), 95–99 (CCGQT), 144–148 (CCRPA), 149–153 (CCETT), 154–158 (CCRTT), and 168–172 (CCQPS). The interval 8–172 (CCQPTCCRTT…TCVSSCCQPS (165 aa)) is 17 X 5 AA repeats of C-C-[RQVSGE]-[SPTQ]-[TASP].

It belongs to the KRTAP type 9 family. In terms of assembly, interacts with hair keratins.

In the hair cortex, hair keratin intermediate filaments are embedded in an interfilamentous matrix, consisting of hair keratin-associated proteins (KRTAP), which are essential for the formation of a rigid and resistant hair shaft through their extensive disulfide bond cross-linking with abundant cysteine residues of hair keratins. The matrix proteins include the high-sulfur and high-glycine-tyrosine keratins. The chain is Keratin-associated protein 9-2 (KRTAP9-2) from Homo sapiens (Human).